Reading from the N-terminus, the 381-residue chain is Succinyl-diaminopimelate desuccinylase (381 aa).

H69 lines the Zn(2+) pocket. Residue D71 is part of the active site. D103 serves as a coordination point for Zn(2+). Residue E137 is the Proton acceptor of the active site. Zn(2+) is bound by residues E138, E166, and H355.

It belongs to the peptidase M20A family. DapE subfamily. As to quaternary structure, homodimer. Requires Zn(2+) as cofactor. Co(2+) is required as a cofactor.

It carries out the reaction N-succinyl-(2S,6S)-2,6-diaminopimelate + H2O = (2S,6S)-2,6-diaminopimelate + succinate. Its pathway is amino-acid biosynthesis; L-lysine biosynthesis via DAP pathway; LL-2,6-diaminopimelate from (S)-tetrahydrodipicolinate (succinylase route): step 3/3. Catalyzes the hydrolysis of N-succinyl-L,L-diaminopimelic acid (SDAP), forming succinate and LL-2,6-diaminopimelate (DAP), an intermediate involved in the bacterial biosynthesis of lysine and meso-diaminopimelic acid, an essential component of bacterial cell walls. This is Succinyl-diaminopimelate desuccinylase from Rickettsia akari (strain Hartford).